Consider the following 558-residue polypeptide: Dihydroxy-acid dehydratase (558 aa).

Asp78 lines the Mg(2+) pocket. Cys119 is a [2Fe-2S] cluster binding site. Positions 120 and 121 each coordinate Mg(2+). An N6-carboxylysine modification is found at Lys121. Cys192 lines the [2Fe-2S] cluster pocket. Glu446 is a Mg(2+) binding site. Ser472 acts as the Proton acceptor in catalysis.

Belongs to the IlvD/Edd family. In terms of assembly, homodimer. [2Fe-2S] cluster is required as a cofactor. Requires Mg(2+) as cofactor.

It carries out the reaction (2R)-2,3-dihydroxy-3-methylbutanoate = 3-methyl-2-oxobutanoate + H2O. The catalysed reaction is (2R,3R)-2,3-dihydroxy-3-methylpentanoate = (S)-3-methyl-2-oxopentanoate + H2O. The protein operates within amino-acid biosynthesis; L-isoleucine biosynthesis; L-isoleucine from 2-oxobutanoate: step 3/4. It functions in the pathway amino-acid biosynthesis; L-valine biosynthesis; L-valine from pyruvate: step 3/4. Functionally, functions in the biosynthesis of branched-chain amino acids. Catalyzes the dehydration of (2R,3R)-2,3-dihydroxy-3-methylpentanoate (2,3-dihydroxy-3-methylvalerate) into 2-oxo-3-methylpentanoate (2-oxo-3-methylvalerate) and of (2R)-2,3-dihydroxy-3-methylbutanoate (2,3-dihydroxyisovalerate) into 2-oxo-3-methylbutanoate (2-oxoisovalerate), the penultimate precursor to L-isoleucine and L-valine, respectively. This Campylobacter jejuni subsp. doylei (strain ATCC BAA-1458 / RM4099 / 269.97) protein is Dihydroxy-acid dehydratase.